The sequence spans 557 residues: Dihydroxy-acid dehydratase (557 aa).

A Mg(2+)-binding site is contributed by aspartate 78. Cysteine 119 contributes to the [2Fe-2S] cluster binding site. The Mg(2+) site is built by aspartate 120 and lysine 121. Lysine 121 is modified (N6-carboxylysine). Cysteine 192 is a binding site for [2Fe-2S] cluster. Mg(2+) is bound at residue glutamate 443. The active-site Proton acceptor is the serine 469.

The protein belongs to the IlvD/Edd family. In terms of assembly, homodimer. Requires [2Fe-2S] cluster as cofactor. It depends on Mg(2+) as a cofactor.

It carries out the reaction (2R)-2,3-dihydroxy-3-methylbutanoate = 3-methyl-2-oxobutanoate + H2O. It catalyses the reaction (2R,3R)-2,3-dihydroxy-3-methylpentanoate = (S)-3-methyl-2-oxopentanoate + H2O. Its pathway is amino-acid biosynthesis; L-isoleucine biosynthesis; L-isoleucine from 2-oxobutanoate: step 3/4. It functions in the pathway amino-acid biosynthesis; L-valine biosynthesis; L-valine from pyruvate: step 3/4. In terms of biological role, functions in the biosynthesis of branched-chain amino acids. Catalyzes the dehydration of (2R,3R)-2,3-dihydroxy-3-methylpentanoate (2,3-dihydroxy-3-methylvalerate) into 2-oxo-3-methylpentanoate (2-oxo-3-methylvalerate) and of (2R)-2,3-dihydroxy-3-methylbutanoate (2,3-dihydroxyisovalerate) into 2-oxo-3-methylbutanoate (2-oxoisovalerate), the penultimate precursor to L-isoleucine and L-valine, respectively. The polypeptide is Dihydroxy-acid dehydratase (Sulfurihydrogenibium sp. (strain YO3AOP1)).